Consider the following 218-residue polypeptide: Ribosomal RNA large subunit methyltransferase E (218 aa).

The S-adenosyl-L-methionine site is built by glycine 64, tryptophan 66, aspartate 92, aspartate 108, and aspartate 133. The Proton acceptor role is filled by lysine 173.

The protein belongs to the class I-like SAM-binding methyltransferase superfamily. RNA methyltransferase RlmE family.

It localises to the cytoplasm. The enzyme catalyses uridine(2552) in 23S rRNA + S-adenosyl-L-methionine = 2'-O-methyluridine(2552) in 23S rRNA + S-adenosyl-L-homocysteine + H(+). Functionally, specifically methylates the uridine in position 2552 of 23S rRNA at the 2'-O position of the ribose in the fully assembled 50S ribosomal subunit. This is Ribosomal RNA large subunit methyltransferase E from Paracidovorax citrulli (strain AAC00-1) (Acidovorax citrulli).